A 478-amino-acid chain; its full sequence is ATP-dependent RNA helicase DDX19A (478 aa).

The residue at position 2 (Ala-2) is an N-acetylalanine. The segment at 2–299 (ATDSWALAVD…DPNIIKLKRE (298 aa)) is N-terminal lobe. Lys-26 participates in a covalent cross-link: Glycyl lysine isopeptide (Lys-Gly) (interchain with G-Cter in SUMO1); alternate. A Glycyl lysine isopeptide (Lys-Gly) (interchain with G-Cter in SUMO2); alternate cross-link involves residue Lys-26. The interval 34-53 (TNGVIKTSTTAEKTEEEEKE) is disordered. Thr-42 is modified (phosphothreonine). The N-terminal helix stretch occupies residues 54-67 (DRAAQSLLNKLIRS). Positions 91–119 (KSFEELRLKPQLLQGVYAMGFNRPSKIQE) match the Q motif motif. Residues Gln-118 and 137-144 (SQSGTGKT) each bind ATP. One can recognise a Helicase ATP-binding domain in the interval 124–294 (MMLAEPPQNL…QKVVPDPNII (171 aa)). The short motif at 241 to 244 (DEAD) is the DEAD box element. A C-terminal lobe region spans residues 300-478 (EETLDTIKQY…DLDEIEKIAN (179 aa)). The region spanning 305-473 (TIKQYYVLCN…RLDTDDLDEI (169 aa)) is the Helicase C-terminal domain. ATP is bound by residues Arg-428 and Arg-431.

It belongs to the DEAD box helicase family. DDX19/DBP5 subfamily. As to expression, found in testis, heart, brain, liver, skeletal muscle, and kidney.

It localises to the cytoplasm. Its subcellular location is the nucleus. It is found in the nucleoplasm. The catalysed reaction is ATP + H2O = ADP + phosphate + H(+). In terms of biological role, ATP-dependent RNA helicase involved in mRNA export from the nucleus. Rather than unwinding RNA duplexes, DDX19 functions as a remodeler of ribonucleoprotein particles, whereby proteins bound to nuclear mRNA are dissociated and replaced by cytoplasmic mRNA binding proteins. In Mus musculus (Mouse), this protein is ATP-dependent RNA helicase DDX19A (Ddx19a).